The chain runs to 1031 residues: Sister chromatid cohesion 1 protein 4 (1031 aa).

The disordered stretch occupies residues 461–481; the sequence is TPDKEDPGTCNDDAGNNNITG. The short motif at 545–552 is the Nuclear localization signal element; sequence TKRLRSAP. Disordered regions lie at residues 661–703, 742–772, and 803–835; these read VEEN…EELK, EKLD…ADPN, and ELPH…VGST. Basic and acidic residues-rich tracts occupy residues 742–762 and 803–825; these read EKLD…HDGE and ELPH…RDDQ.

This sequence belongs to the rad21 family. Component of the cohesin complex. Expressed in tissues containing dividing cells such as seedlings, flower buds, flowers and inflorescence meristem tissue.

It is found in the nucleus. The protein resides in the chromosome. It localises to the centromere. Its function is as follows. Involved in sister chromatid and centromere cohesion during mitosis. The sequence is that of Sister chromatid cohesion 1 protein 4 (SYN4) from Arabidopsis thaliana (Mouse-ear cress).